Consider the following 219-residue polypeptide: RNA-3 uncharacterized 24.7 kDa protein (219 aa).

The chain is RNA-3 uncharacterized 24.7 kDa protein from Beta macrocarpa (Beet).